The primary structure comprises 210 residues: Claudin-4 (210 aa).

The Cytoplasmic portion of the chain corresponds to 1 to 7; the sequence is MASMGLQ. Residues 1-103 are interaction with EPHA2; the sequence is MASMGLQVMG…GVLLSVVGGK (103 aa). The chain crosses the membrane as a helical span at residues 8 to 28; the sequence is VMGIALAVLGWLGAILSCALP. Topologically, residues 29-81 are extracellular; sequence MWRVTAFIGSNIVTSQTIWEGLWMNCVVQSTGQMQCKVYDSLLALPQDLQAAR. Cys-54 and Cys-64 are oxidised to a cystine. The chain crosses the membrane as a helical span at residues 82–102; the sequence is ALMVVSIILAALGVLLSVVGG. At 103-117 the chain is on the cytoplasmic side; it reads KCTNCVEDESAKAKT. Residues 118-138 form a helical membrane-spanning segment; that stretch reads MIVAGVVFLLAGLLVMVPASW. At 139–160 the chain is on the extracellular side; that stretch reads TANNIIRDFYNPLVVSGQKREM. Residues 161 to 181 form a helical membrane-spanning segment; it reads GASLYVGWAASGLLLLGGALL. At 182-210 the chain is on the cytoplasmic side; that stretch reads CCNCPPRADKPYSAKYSAAARSAPASNYV. The residue at position 209 (Tyr-209) is a Phosphotyrosine. The interactions with TJP1, TJP2 and TJP3 stretch occupies residues 209–210; sequence YV.

The protein belongs to the claudin family. In terms of assembly, can form heteropolymeric strands with other claudins. Interacts with CLDN8. Interacts with CLDN1. Directly interacts with TJP1/ZO-1. Interacts with TJP2/ZO-2 and TJP3/ZO-3. Interacts with EPHA2; phosphorylates CLDN4 and may regulate tight junctions. In terms of processing, phosphorylated. Phosphorylation by EPHA2 is stimulated by EFNA1 and alters interaction with TJP1.

The protein localises to the cell junction. It localises to the tight junction. It is found in the cell membrane. The enzyme catalyses chloride(in) = chloride(out). The catalysed reaction is bromide(in) = bromide(out). It carries out the reaction iodide(out) = iodide(in). It catalyses the reaction fluoride(in) = fluoride(out). Its function is as follows. Can associate with other claudins to regulate tight junction structural and functional strand dynamics. May coassemble with CLDN8 into tight junction strands containing anion-selective channels that convey paracellular chloride permeability in renal collecting ducts. May integrate into CLDN3 strands to modulate localized tight junction barrier properties. May disrupt strand assembly of channel-forming CLDN2 and CLDN15 and inhibit cation conductance. Cannot form tight junction strands on its own. In Canis lupus familiaris (Dog), this protein is Claudin-4 (CLDN4).